The sequence spans 259 residues: Small ribosomal subunit protein uS2 (259 aa).

The disordered stretch occupies residues 234–259; that stretch reads VAEDSEEVSTVDADAITAEDFETEEV. Residues 250-259 show a composition bias toward acidic residues; that stretch reads TAEDFETEEV.

It belongs to the universal ribosomal protein uS2 family.

The chain is Small ribosomal subunit protein uS2 from Sulfurimonas denitrificans (strain ATCC 33889 / DSM 1251) (Thiomicrospira denitrificans (strain ATCC 33889 / DSM 1251)).